A 310-amino-acid chain; its full sequence is Tagatose-6-phosphate kinase (310 aa).

This sequence belongs to the carbohydrate kinase PfkB family. LacC subfamily.

The catalysed reaction is D-tagatofuranose 6-phosphate + ATP = D-tagatofuranose 1,6-bisphosphate + ADP + H(+). The protein operates within carbohydrate metabolism; D-tagatose 6-phosphate degradation; D-glyceraldehyde 3-phosphate and glycerone phosphate from D-tagatose 6-phosphate: step 1/2. This chain is Tagatose-6-phosphate kinase, found in Streptococcus mutans serotype c (strain ATCC 700610 / UA159).